Consider the following 243-residue polypeptide: 1-(5-phosphoribosyl)-5-[(5-phosphoribosylamino)methylideneamino] imidazole-4-carboxamide isomerase (243 aa).

The active-site Proton acceptor is D8. D129 functions as the Proton donor in the catalytic mechanism.

The protein belongs to the HisA/HisF family.

It is found in the cytoplasm. It catalyses the reaction 1-(5-phospho-beta-D-ribosyl)-5-[(5-phospho-beta-D-ribosylamino)methylideneamino]imidazole-4-carboxamide = 5-[(5-phospho-1-deoxy-D-ribulos-1-ylimino)methylamino]-1-(5-phospho-beta-D-ribosyl)imidazole-4-carboxamide. The protein operates within amino-acid biosynthesis; L-histidine biosynthesis; L-histidine from 5-phospho-alpha-D-ribose 1-diphosphate: step 4/9. This chain is 1-(5-phosphoribosyl)-5-[(5-phosphoribosylamino)methylideneamino] imidazole-4-carboxamide isomerase, found in Parvibaculum lavamentivorans (strain DS-1 / DSM 13023 / NCIMB 13966).